The sequence spans 1053 residues: Putative ABC transporter C family member 15 (1053 aa).

The ABC transmembrane type-1 1 domain maps to 1–180; it reads MSVDVQRITD…LPDLLSALVQ (180 aa). Transmembrane regions (helical) follow at residues 11–31, 36–56, 125–145, and 151–171; these read FIWY…AIYI, LGLG…CNYP, FILW…CMLM, and AGAV…IFGL. One can recognise an ABC transporter 1 domain in the interval 214-437; it reads VEIENGAFSW…NIGFEVLTQC (224 aa). 249–256 lines the ATP pocket; sequence GAVGSGKS. Helical transmembrane passes span 481–503, 523–543, 595–615, 714–734, and 738–758; these read LLVP…SNYW, ILLV…ARTI, MAVK…TIFV, LSHF…EGVI, and IAGL…TVIW. Residues 483–765 form the ABC transmembrane type-1 2 domain; the sequence is VPFIILAQSC…VIWNICNAEN (283 aa). The region spanning 804-1036 is the ABC transporter 2 domain; it reads FRDLQVRYAE…EDSFFSKLIK (233 aa). ATP is bound at residue 836–843; the sequence is GRTGSGKS.

This sequence belongs to the ABC transporter superfamily. ABCC family. Conjugate transporter (TC 3.A.1.208) subfamily.

It localises to the membrane. It carries out the reaction ATP + H2O + xenobioticSide 1 = ADP + phosphate + xenobioticSide 2.. Pump for glutathione S-conjugates. This Arabidopsis thaliana (Mouse-ear cress) protein is Putative ABC transporter C family member 15 (ABCC15).